The sequence spans 546 residues: MGILFAALLAMTNPHLATGQIHWGNLSKIGVVGTGSASYKVMTQSSHQSLVIKLMPNITAIDNCTKTEIMEYKRLLGTVLKPIREALNAITKNIKPIQSSTTSRRHKRFAGVVLAGAALGVATAAQITAGIALHQSMMNSQAIESLKASLETTNQAIEEIRQAGQEMVLAVQGVQDYINNELVPAMGQLSCEIVGQKLGLKLLRYYTEILSLFGPSLRDPVSAELSIQALSYALGGDINKILEKLGYSGSDLLAILESKGIKAKITYVDIESYFIVLSIAYPSLSEIKGVIVHRLESVSYNIGSQEWYTTVPRYVATQGYLISNFDDTPCAFTPEGTICSQNAIYPMSPLLQECFRGSTRSCARTLVLGSIGNRFILSKGNLIGNCASILCKCYTTGSIISQDPDKILTYIAADQCPVVEVGGVTIQVGSREYSDAVYLHEIDLGPPISLEKLDVGTNLWNAVTKLEKAKDLLDSSDLILENIKGVSVTNTGYILVGVGLIAVVGILIITCCCKKRRTDNKVSTMVLNPGLRPDLTGTSKSYVRSL.

Positions 1 to 19 (MGILFAALLAMTNPHLATG) are cleaved as a signal peptide. Residues 20 to 491 (QIHWGNLSKI…NIKGVSVTNT (472 aa)) are Extracellular-facing. Asparagine 25, asparagine 57, and asparagine 63 each carry an N-linked (GlcNAc...) asparagine; by host glycan. Residues 109–133 (FAGVVLAGAALGVATAAQITAGIAL) are fusion peptide. A coiled-coil region spans residues 134–162 (HQSMMNSQAIESLKASLETTNQAIEEIRQ). 4 disulfides stabilise this stretch: cysteine 330–cysteine 339, cysteine 354–cysteine 362, cysteine 386–cysteine 391, and cysteine 393–cysteine 416. Residues 458–483 (NLWNAVTKLEKAKDLLDSSDLILENI) are a coiled coil. A helical transmembrane segment spans residues 492 to 512 (GYILVGVGLIAVVGILIITCC). The Cytoplasmic segment spans residues 513–546 (CKKRRTDNKVSTMVLNPGLRPDLTGTSKSYVRSL).

This sequence belongs to the paramyxoviruses fusion glycoprotein family. In terms of assembly, homotrimer of disulfide-linked F1-F2. The inactive precursor F0 is glycosylated and proteolytically cleaved into F1 and F2 to be functionally active. The cleavage is mediated by cellular proteases during the transport and maturation of the polypeptide.

It localises to the virion membrane. The protein localises to the host cell membrane. Its function is as follows. Class I viral fusion protein. Under the current model, the protein has at least 3 conformational states: pre-fusion native state, pre-hairpin intermediate state, and post-fusion hairpin state. During viral and plasma cell membrane fusion, the heptad repeat (HR) regions assume a trimer-of-hairpins structure, positioning the fusion peptide in close proximity to the C-terminal region of the ectodomain. The formation of this structure appears to drive apposition and subsequent fusion of viral and plasma cell membranes. Directs fusion of viral and cellular membranes leading to delivery of the nucleocapsid into the cytoplasm. This fusion is pH independent and occurs directly at the outer cell membrane. The trimer of F1-F2 (F protein) probably interacts with HN at the virion surface. Upon HN binding to its cellular receptor, the hydrophobic fusion peptide is unmasked and interacts with the cellular membrane, inducing the fusion between cell and virion membranes. Later in infection, F proteins expressed at the plasma membrane of infected cells could mediate fusion with adjacent cells to form syncytia, a cytopathic effect that could lead to tissue necrosis. This is Fusion glycoprotein F0 (F) from Bos indicus (Zebu).